The primary structure comprises 473 residues: Ribulose bisphosphate carboxylase large chain (473 aa).

Positions 1–2 are excised as a propeptide; it reads MS. Residue proline 3 is modified to N-acetylproline. Lysine 14 is modified (N6,N6,N6-trimethyllysine). Residues asparagine 123 and threonine 173 each contribute to the substrate site. Lysine 175 serves as the catalytic Proton acceptor. A substrate-binding site is contributed by lysine 177. Mg(2+) contacts are provided by lysine 201, aspartate 203, and glutamate 204. Position 201 is an N6-carboxylysine (lysine 201). Residue histidine 294 is the Proton acceptor of the active site. Arginine 295, histidine 327, and serine 379 together coordinate substrate.

This sequence belongs to the RuBisCO large chain family. Type I subfamily. In terms of assembly, heterohexadecamer of 8 large chains and 8 small chains; disulfide-linked. The disulfide link is formed within the large subunit homodimers. It depends on Mg(2+) as a cofactor. In terms of processing, the disulfide bond which can form in the large chain dimeric partners within the hexadecamer appears to be associated with oxidative stress and protein turnover.

The protein localises to the plastid. It localises to the chloroplast. The catalysed reaction is 2 (2R)-3-phosphoglycerate + 2 H(+) = D-ribulose 1,5-bisphosphate + CO2 + H2O. It carries out the reaction D-ribulose 1,5-bisphosphate + O2 = 2-phosphoglycolate + (2R)-3-phosphoglycerate + 2 H(+). Its function is as follows. RuBisCO catalyzes two reactions: the carboxylation of D-ribulose 1,5-bisphosphate, the primary event in carbon dioxide fixation, as well as the oxidative fragmentation of the pentose substrate in the photorespiration process. Both reactions occur simultaneously and in competition at the same active site. The sequence is that of Ribulose bisphosphate carboxylase large chain from Cajanus cajan (Pigeon pea).